Reading from the N-terminus, the 189-residue chain is GTP cyclohydrolase 1 (189 aa).

Zn(2+)-binding residues include C78, H81, and C150.

The protein belongs to the GTP cyclohydrolase I family. Homomer.

It catalyses the reaction GTP + H2O = 7,8-dihydroneopterin 3'-triphosphate + formate + H(+). It functions in the pathway cofactor biosynthesis; 7,8-dihydroneopterin triphosphate biosynthesis; 7,8-dihydroneopterin triphosphate from GTP: step 1/1. The protein is GTP cyclohydrolase 1 of Bacillus mycoides (strain KBAB4) (Bacillus weihenstephanensis).